The following is a 474-amino-acid chain: Photosystem II CP43 reaction center protein (474 aa).

Residues 1–14 constitute a propeptide that is removed on maturation; that stretch reads MKTLYSLRRFYPVE. Position 15 is an N-acetylthreonine (threonine 15). Threonine 15 bears the Phosphothreonine mark. 5 consecutive transmembrane segments (helical) span residues 69–93, 134–155, 178–201, 256–276, and 292–313; these read LFEV…PHLA, LLGP…KDRN, KALY…RKIT, KPFA…LSYS, and WFNN…ASQA. Residue glutamate 368 participates in [CaMn4O5] cluster binding. Residues 448-472 form a helical membrane-spanning segment; sequence RARAAAAGFEKGIDRDFEPVLSMTP.

It belongs to the PsbB/PsbC family. PsbC subfamily. As to quaternary structure, PSII is composed of 1 copy each of membrane proteins PsbA, PsbB, PsbC, PsbD, PsbE, PsbF, PsbH, PsbI, PsbJ, PsbK, PsbL, PsbM, PsbT, PsbX, PsbY, PsbZ, Psb30/Ycf12, at least 3 peripheral proteins of the oxygen-evolving complex and a large number of cofactors. It forms dimeric complexes. Binds multiple chlorophylls and provides some of the ligands for the Ca-4Mn-5O cluster of the oxygen-evolving complex. It may also provide a ligand for a Cl- that is required for oxygen evolution. PSII binds additional chlorophylls, carotenoids and specific lipids. serves as cofactor.

The protein resides in the plastid. The protein localises to the chloroplast thylakoid membrane. Functionally, one of the components of the core complex of photosystem II (PSII). It binds chlorophyll and helps catalyze the primary light-induced photochemical processes of PSII. PSII is a light-driven water:plastoquinone oxidoreductase, using light energy to abstract electrons from H(2)O, generating O(2) and a proton gradient subsequently used for ATP formation. This Citrus sinensis (Sweet orange) protein is Photosystem II CP43 reaction center protein.